Reading from the N-terminus, the 266-residue chain is Pyrrolizixenacetamide deacetylase (266 aa).

Acetate is bound at residue threonine 28. Serine 94 acts as the Nucleophile in catalysis. Leucine 95 contributes to the acetate binding site. Residues aspartate 215 and histidine 242 each act as charge relay system in the active site. Histidine 242 is a binding site for acetate.

It belongs to the AB hydrolase superfamily. Homodimer.

The catalysed reaction is pyrrolizixenacetamide + H2O = 3-amino-5,6,7,7a-tetrahydro-1H-pyrrolizin-1-one + acetate + H(+). Its function is as follows. Involved in the biosynthetic pathway of pyrrolizwilline, a pyrrolizidine alkaloid. Catalyzes the N-deacetylation of pyrrolizixenacetamide. The polypeptide is Pyrrolizixenacetamide deacetylase (Xenorhabdus hominickii).